We begin with the raw amino-acid sequence, 156 residues long: Protein archease-like (156 aa).

Ca(2+)-binding residues include Asp25, Asp155, and Ile156.

This sequence belongs to the archease family.

Its function is as follows. Component of the tRNA-splicing ligase complex required to facilitate the enzymatic turnover of catalytic subunit RtcB. Plays an important role in a RNA repair and splicing pathway which controls axon regeneration in response to peripheral (PNS) and central nervous system (CNS) injury, by activating splicing of Xbp1 to promote axon regeneration in response to axotomy. This is Protein archease-like from Drosophila melanogaster (Fruit fly).